Reading from the N-terminus, the 544-residue chain is MLLKSLFPSILAATSFVSSVAAEDLPAIEIVGNKFFYSNNGSQFYIKGIAYQQNNLDSNESFVDPLANPEHCKRDIPYLEAVDTNVIRVYALDTSQDHTECMQMLQDAGIYVIADLSQPDESINRDDPSWDLDLFERYTSVVDLFHNYTNILGFFAGNEVTNKKSNTDASAFVKAAIRDTKAYIKSKGYRSIPVGYSANDDSAIRVSLADYFACGDEDEAADFFGINMYEWCGDSSYKASGYESATNDYKNLGIPIFFSEYGCNEVRPRKFTEVATLFGDQMTPVWSGGIVYMYFEEENNYGLVSIKDNTVSTLKDYSYYSSEIKDIHPSSAKASAESASSISRTTCPTNTNNWEASTNLPPTPDKEVCECMSASLKCVVDDKVDSDDYSDLFSYICAKIDCDGINANGTTGEYGAYSPCHSKDKLSFVMNLYYEQNKESKSACDFGGSASLQSAKTASSCSAYLSSAGSSGLGTVSGTVRTDTSQSTSDSGSGSSSSSSSSSSSSSSGSSGSKSAASIVSVNLLTKIATIGISIVVGFGLITM.

A signal peptide spans 1–22 (MLLKSLFPSILAATSFVSSVAA). 2 N-linked (GlcNAc...) asparagine glycosylation sites follow: asparagine 40 and asparagine 59. A disulfide bridge connects residues cysteine 72 and cysteine 101. Asparagine 147 carries N-linked (GlcNAc...) asparagine glycosylation. Intrachain disulfides connect cysteine 214–cysteine 347, cysteine 232–cysteine 263, cysteine 369–cysteine 420, cysteine 378–cysteine 444, and cysteine 397–cysteine 402. Residue asparagine 408 is glycosylated (N-linked (GlcNAc...) asparagine). The segment at 469-514 (GSSGLGTVSGTVRTDTSQSTSDSGSGSSSSSSSSSSSSSSGSSGSK) is disordered. Serine 515 is lipidated: GPI-anchor amidated serine. Positions 516 to 544 (AASIVSVNLLTKIATIGISIVVGFGLITM) are cleaved as a propeptide — removed in mature form.

This sequence belongs to the glycosyl hydrolase 72 family.

It is found in the cell membrane. Required for apical cell growth and plays an essential role in morphogenesis. May be integral to the pathogenic ability of the organism. The chain is pH-responsive protein 2 (PHR2) from Candida albicans (strain SC5314 / ATCC MYA-2876) (Yeast).